The chain runs to 283 residues: Shikimate dehydrogenase (NADP(+)) (283 aa).

Shikimate contacts are provided by residues 16–18 (SLS) and Thr-63. Lys-67 functions as the Proton acceptor in the catalytic mechanism. Asp-79 contacts NADP(+). Residues Asn-88 and Asp-103 each coordinate shikimate. NADP(+)-binding positions include 128 to 132 (GAGGA), Ala-223, and Gly-243.

Belongs to the shikimate dehydrogenase family. In terms of assembly, homodimer.

The enzyme catalyses shikimate + NADP(+) = 3-dehydroshikimate + NADPH + H(+). It participates in metabolic intermediate biosynthesis; chorismate biosynthesis; chorismate from D-erythrose 4-phosphate and phosphoenolpyruvate: step 4/7. In terms of biological role, involved in the biosynthesis of the chorismate, which leads to the biosynthesis of aromatic amino acids. Catalyzes the reversible NADPH linked reduction of 3-dehydroshikimate (DHSA) to yield shikimate (SA). This chain is Shikimate dehydrogenase (NADP(+)), found in Xanthomonas campestris pv. campestris (strain B100).